The chain runs to 58 residues: uncharacterized protein (58 aa).

This is an uncharacterized protein from Bacillus anthracis.